Reading from the N-terminus, the 331-residue chain is Trans-O-hydroxybenzylidenepyruvate hydratase-aldolase (331 aa).

The protein belongs to the DapA family.

The enzyme catalyses (3E)-4-(2-hydroxyphenyl)-2-oxobut-3-enoate + H2O = salicylaldehyde + pyruvate. It participates in aromatic compound metabolism; naphthalene degradation. Its function is as follows. Involved in the naphthalene upper catabolic pathway. Catalyzes the transformation of trans-O-hydroxybenzylidenepyruvate (THBPA) to salicylaldehyde and pyruvate. The reaction is reversible. Can also use substrate which carry trans-alpha,beta-unsaturated keto acid side chain and adjacent hydroxyl group such as trans-4-(3-hydroxy-2-thianaphthenyl)-2-oxo-but-3-enoate, trans-4-(3-hydroxy-2-benzofuranyl)-2-oxobut-3-enoate, and trans-4-(3-hydroxy-2-thienyl)-2-oxobut-3-enoate. This chain is Trans-O-hydroxybenzylidenepyruvate hydratase-aldolase (nahE), found in Pseudomonas putida (Arthrobacter siderocapsulatus).